The following is a 736-amino-acid chain: Sulfate transporter (736 aa).

Positions 1-28 are disordered; the sequence is MSSESKEPHVLSPKDSFEGNDRYSPPSR. Phosphoserine is present on residues serine 12 and serine 16. A run of 2 helical transmembrane segments spans residues 114 to 134 and 139 to 159; these read VMSGLIVGILLVPQSIAYSLL and PIYGLYTSFFASLIYFLLGTS. 2 N-linked (GlcNAc...) asparagine glycosylation sites follow: asparagine 201 and asparagine 207. The next 6 membrane-spanning stretches (helical) occupy residues 229 to 249, 257 to 277, 380 to 400, 422 to 442, 457 to 477, and 526 to 546; these read FLAGIYQVAMGFFQVGFVSVY, GFVTGASFTILTSQAKYLLGL, LIPSVAVDAIAISIIGFAITV, AIGFCNIIPSFFHCFTTSAAL, LSGVMTALVLLLVLLVIAPLF, and LISTELGLLIGVCFSMFCVIL. The region spanning 570 to 721 is the STAS domain; that stretch reads AYKNLQARPG…YSVYEAMAFA (152 aa).

This sequence belongs to the SLC26A/SulP transporter (TC 2.A.53) family. N-glycosylated.

The protein localises to the cell membrane. It localises to the apical cell membrane. The catalysed reaction is oxalate(in) + sulfate(out) = oxalate(out) + sulfate(in). It catalyses the reaction sulfate(out) + 2 chloride(in) = sulfate(in) + 2 chloride(out). The enzyme catalyses oxalate(out) + 2 chloride(in) = oxalate(in) + 2 chloride(out). It carries out the reaction bromide(in) + chloride(out) = bromide(out) + chloride(in). The catalysed reaction is nitrate(in) + chloride(out) = nitrate(out) + chloride(in). It catalyses the reaction iodide(in) + chloride(out) = iodide(out) + chloride(in). Sulfate transporter which mediates sulfate uptake into chondrocytes in order to maintain adequate sulfation of proteoglycans which is needed for cartilage development. Mediates electroneutral anion exchange of sulfate ions for oxalate ions, sulfate and oxalate ions for chloride and/or hydroxyl ions and chloride ions for bromide, iodide and nitrate ions. The coupling of sulfate transport to both hydroxyl and chloride ions likely serves to ensure transport at both acidic pH when most sulfate uptake is mediated by sulfate-hydroxide exchange and alkaline pH when most sulfate uptake is mediated by sulfate-chloride exchange. Essential for chondrocyte proliferation, differentiation and cell size expansion. The sequence is that of Sulfate transporter (SLC26A2) from Equus caballus (Horse).